We begin with the raw amino-acid sequence, 349 residues long: Aquaporin-4 (349 aa).

The next 2 helical transmembrane spans lie at 92–112 and 125–147; these read LSESLAMFFFMSLLLGCAATA and AFYHGFSIIFAIYVAGGISGGLL. The NPA 1 motif lies at 148–150; it reads NPA. A helical transmembrane segment spans residues 167 to 187; that stretch reads LIYMSAQYFGAFIASAVVYLI. N-linked (GlcNAc...) asparagine glycans are attached at residues asparagine 194 and asparagine 207. 2 consecutive transmembrane segments (helical) span residues 225-245 and 256-276; these read GAIFNQIFCTMLLTIGFLSIC and MFPFAVGMLIMTVFLAFSYSA. Residues 281–283 carry the NPA 2 motif; that stretch reads NPA. Residues 314–334 form a helical membrane-spanning segment; sequence WLFPYVGALLGGVIYEIFIGI.

This sequence belongs to the MIP/aquaporin (TC 1.A.8) family.

It is found in the cell membrane. In terms of biological role, aquaglyceroporin that may modulate the water content and osmolytes during anhydrobiosis. In Milnesium tardigradum (Water bear), this protein is Aquaporin-4.